The following is a 1365-amino-acid chain: DNA-directed RNA polymerase subunit beta'' (1365 aa).

Zn(2+) is bound by residues C224, C295, C302, and C305.

It belongs to the RNA polymerase beta' chain family. RpoC2 subfamily. As to quaternary structure, in plastids the minimal PEP RNA polymerase catalytic core is composed of four subunits: alpha, beta, beta', and beta''. When a (nuclear-encoded) sigma factor is associated with the core the holoenzyme is formed, which can initiate transcription. Zn(2+) is required as a cofactor.

It localises to the plastid. It is found in the chloroplast. The enzyme catalyses RNA(n) + a ribonucleoside 5'-triphosphate = RNA(n+1) + diphosphate. Its function is as follows. DNA-dependent RNA polymerase catalyzes the transcription of DNA into RNA using the four ribonucleoside triphosphates as substrates. The sequence is that of DNA-directed RNA polymerase subunit beta'' from Fagopyrum esculentum subsp. ancestrale (Wild buckwheat).